We begin with the raw amino-acid sequence, 292 residues long: Nucleotide-binding protein AZOSEA20610 (292 aa).

8 to 15 serves as a coordination point for ATP; that stretch reads GLSGSGKS. 57-60 contacts GTP; sequence DVRS.

It belongs to the RapZ-like family.

Its function is as follows. Displays ATPase and GTPase activities. The chain is Nucleotide-binding protein AZOSEA20610 from Aromatoleum aromaticum (strain DSM 19018 / LMG 30748 / EbN1) (Azoarcus sp. (strain EbN1)).